Consider the following 189-residue polypeptide: Segregation and condensation protein B (189 aa).

The protein belongs to the ScpB family. As to quaternary structure, homodimer. Homodimerization may be required to stabilize the binding of ScpA to the Smc head domains. Component of a cohesin-like complex composed of ScpA, ScpB and the Smc homodimer, in which ScpA and ScpB bind to the head domain of Smc. The presence of the three proteins is required for the association of the complex with DNA.

The protein localises to the cytoplasm. Participates in chromosomal partition during cell division. May act via the formation of a condensin-like complex containing Smc and ScpA that pull DNA away from mid-cell into both cell halves. This is Segregation and condensation protein B from Streptococcus sanguinis (strain SK36).